The primary structure comprises 512 residues: Dihydroniloticin synthase CYP71CD1 (512 aa).

A helical transmembrane segment spans residues 7 to 27; the sequence is YFTVTSLLVFLTFLLRLVWGW. Cysteine 451 lines the heme pocket.

This sequence belongs to the cytochrome P450 family. Requires heme as cofactor. As to expression, accumulates in mature fruits and in juice vesicles.

The protein localises to the membrane. The enzyme catalyses tirucalla-7,24-dien-3beta-ol + 2 reduced [NADPH--hemoprotein reductase] + 2 O2 = dihydroniloticin + 2 oxidized [NADPH--hemoprotein reductase] + 2 H2O + 2 H(+). The protein operates within secondary metabolite biosynthesis; terpenoid biosynthesis. Functionally, monooxygenase involved in the biosynthesis of limonoids triterpene natural products such as limonin, a compound with insecticidal activity responsible for the bitter taste in citrus. Catalyzes the conversion of tirucalladienol to dihydroniloticin. The chain is Dihydroniloticin synthase CYP71CD1 from Citrus sinensis (Sweet orange).